We begin with the raw amino-acid sequence, 150 residues long: Large ribosomal subunit protein bL9 (150 aa).

The protein belongs to the bacterial ribosomal protein bL9 family.

Binds to the 23S rRNA. The protein is Large ribosomal subunit protein bL9 of Burkholderia pseudomallei (strain 668).